The following is a 397-amino-acid chain: SEC14-like protein 6 (397 aa).

The 174-residue stretch at 76–249 (PPEVVRLYNA…EFGGTMTDPD (174 aa)) folds into the CRAL-TRIO domain. One can recognise a GOLD domain in the interval 252–383 (PKCLTKINYG…SKRISYTVEV (132 aa)).

The polypeptide is SEC14-like protein 6 (SEC14L6) (Homo sapiens (Human)).